The sequence spans 141 residues: Drosulfakinins (141 aa).

A signal peptide spans 1-33 (MGLRSCTHLATLFMTLWALAFCFLVVVPIPAQT). A propeptide spanning residues 34 to 73 (TSLQNAKDDRRLQELESKIGAESDQPNANLVGPSFSRFGD) is cleaved from the precursor. Residues 51-72 (KIGAESDQPNANLVGPSFSRFG) are disordered. Phe82 bears the Phenylalanine amide mark. Positions 86 to 111 (VPLISRPMIPIELDLLMDNDDERTKA) are excised as a propeptide. Tyr117 is subject to Sulfotyrosine. Phe122 carries the post-translational modification Phenylalanine amide. Tyr134 carries the post-translational modification Sulfotyrosine. Phe139 is subject to Phenylalanine amide.

This sequence belongs to the gastrin/cholecystokinin family.

Its subcellular location is the secreted. In terms of biological role, drosulfakinin-0 (DSK 0) plays diverse biological roles including regulating gut muscle contraction in adults but not in larvae. In Drosophila mauritiana (Fruit fly), this protein is Drosulfakinins.